A 291-amino-acid chain; its full sequence is Glycolipid transfer protein domain-containing protein 2 (291 aa).

An N-linked (GlcNAc...) asparagine glycan is attached at N276.

It belongs to the GLTP family.

The sequence is that of Glycolipid transfer protein domain-containing protein 2 (GLTPD2) from Homo sapiens (Human).